We begin with the raw amino-acid sequence, 237 residues long: Cysteine-rich venom protein DIS1 (237 aa).

A signal peptide spans 1-18 (MFVFILLSLAAVLQQSFG). The SCP domain occupies 37–165 (VDKHNAFRRS…SYNYFYVCQY (129 aa)). 7 disulfide bridges follow: Cys-74–Cys-152, Cys-91–Cys-166, Cys-147–Cys-163, Cys-185–Cys-192, Cys-188–Cys-197, Cys-201–Cys-234, and Cys-219–Cys-232. In terms of domain architecture, ShKT spans 201 to 234 (CSREDVFMNCKSLVAQSNCQDDYIRKNCPATCFC).

Belongs to the CRISP family. As to expression, expressed by the venom gland.

The protein resides in the secreted. In terms of biological role, weakly blocks contraction of smooth muscle elicited by high potassium-induced depolarization, but does not block caffeine-stimulated contraction. May target voltage-gated calcium channels on smooth muscle. The sequence is that of Cysteine-rich venom protein DIS1 from Dispholidus typus (Boomslang).